Consider the following 387-residue polypeptide: Fetuin-B (387 aa).

Residues 1-18 form the signal peptide; it reads MNVLLLLVLCTLAMGCGA. Cystatin fetuin-B-type domains follow at residues 25 to 139 and 150 to 258; these read AARP…YNCT and MTCP…VTCS. Residue Asn-37 is glycosylated (N-linked (GlcNAc...) asparagine). 5 disulfides stabilise this stretch: Cys-94/Cys-105, Cys-118/Cys-138, Cys-152/Cys-155, Cys-217/Cys-225, and Cys-238/Cys-257. A glycan (N-linked (GlcNAc...) asparagine) is linked at Asn-137. The segment at 264 to 306 is disordered; the sequence is APTPRGENATVNQRPANPSKTEELQQQNTAPTNSPTKAVPKGS. Asn-271 carries an N-linked (GlcNAc...) asparagine glycan. Over residues 272–299 the composition is skewed to polar residues; sequence ATVNQRPANPSKTEELQQQNTAPTNSPT. O-linked (GalNAc...) threonine glycosylation is found at Thr-292 and Thr-295. The residue at position 320 (Ser-320) is a Phosphoserine. Positions 366 to 387 are disordered; the sequence is KEQRSAECPGPAQKGYPFILPS.

It belongs to the fetuin family. In terms of tissue distribution, liver and testis.

The protein resides in the secreted. Its function is as follows. Protease inhibitor required for egg fertilization. Required to prevent premature zona pellucida hardening before fertilization, probably by inhibiting the protease activity of ASTL, a protease that mediates the cleavage of ZP2 and triggers zona pellucida hardening. This is Fetuin-B (FETUB) from Bos taurus (Bovine).